Reading from the N-terminus, the 346-residue chain is MVQASGHRRSTRGSKMVSWSVIAKIQEIWCEEDERKMVREFLAEFMSTYVMMVFGLGSVAHMVLNKTYGSYLGVNLGFGFGVTMGVHVAGRISGAHMNAAVTFTNCALGRVPWRKFPVHVLGQFLGSFLAAATIYSLFYTAILHFSGGELMVTGPFATAGIFATYLPDHMTLWRGFLNEEWLTRMLQLCLFTITDQENNPALPGTHALVISILVVIIRVSHGINTGYAINPSRDPPPSIFTFIAGWGKQVFSDGENWWWVPVVAPLLGASLGGIIYLVFIGSTIPREPLKLEDSVAYEDHGITVLPKMGSHEPMISPLTLISVSLANRSSVHSAPPLHESMALEHF.

Residues 1–40 (MVQASGHRRSTRGSKMVSWSVIAKIQEIWCEEDERKMVRE) lie on the Cytoplasmic side of the membrane. Residues 41–58 (FLAEFMSTYVMMVFGLGS) form a helical membrane-spanning segment. At 59–71 (VAHMVLNKTYGSY) the chain is on the extracellular side. A helical membrane pass occupies residues 72 to 89 (LGVNLGFGFGVTMGVHVA). Topologically, residues 90-93 (GRIS) are cytoplasmic. Residues 94 to 107 (GAHMNAAVTFTNCA) constitute an intramembrane region (discontinuously helical). The short motif at 98–100 (NAA) is the NPA 1 element. The Cytoplasmic portion of the chain corresponds to 108 to 115 (LGRVPWRK). A helical transmembrane segment spans residues 116–136 (FPVHVLGQFLGSFLAAATIYS). The Extracellular portion of the chain corresponds to 137-174 (LFYTAILHFSGGELMVTGPFATAGIFATYLPDHMTLWR). The chain crosses the membrane as a helical span at residues 175 to 192 (GFLNEEWLTRMLQLCLFT). Residues 193 to 204 (ITDQENNPALPG) are Cytoplasmic-facing. A helical transmembrane segment spans residues 205–221 (THALVISILVVIIRVSH). At 222–225 (GINT) the chain is on the extracellular side. Residues 226–239 (GYAINPSRDPPPSI) constitute an intramembrane region (discontinuously helical). An NPA 2 motif is present at residues 230 to 232 (NPS). At 240–257 (FTFIAGWGKQVFSDGENW) the chain is on the extracellular side. The helical transmembrane segment at 258-279 (WWVPVVAPLLGASLGGIIYLVF) threads the bilayer. Over 280–346 (IGSTIPREPL…LHESMALEHF (67 aa)) the chain is Cytoplasmic.

Belongs to the MIP/aquaporin (TC 1.A.8) family. Homotetramer; each monomer provides an independent glycerol/water pore.

It localises to the membrane. It catalyses the reaction glycerol(in) = glycerol(out). The enzyme catalyses H2O(in) = H2O(out). Aquaglyceroporins form homotetrameric transmembrane channels, with each monomer independently mediating glycerol and water transport across the plasma membrane along their osmotic gradient. This chain is Putative aquaporin-7B, found in Homo sapiens (Human).